The following is a 354-amino-acid chain: Uroporphyrinogen decarboxylase (354 aa).

Substrate is bound by residues R27 to R31, D77, Y154, T209, and H327.

The protein belongs to the uroporphyrinogen decarboxylase family. Homodimer.

It localises to the cytoplasm. The enzyme catalyses uroporphyrinogen III + 4 H(+) = coproporphyrinogen III + 4 CO2. It participates in porphyrin-containing compound metabolism; protoporphyrin-IX biosynthesis; coproporphyrinogen-III from 5-aminolevulinate: step 4/4. Its function is as follows. Catalyzes the decarboxylation of four acetate groups of uroporphyrinogen-III to yield coproporphyrinogen-III. The sequence is that of Uroporphyrinogen decarboxylase from Salmonella paratyphi B (strain ATCC BAA-1250 / SPB7).